The primary structure comprises 516 residues: Cytochrome P450 1A1 (516 aa).

Positions 33-44 (WQPRVPKGLKSP) are mitochondrial targeting signal. O-linked (GlcNAc) serine glycosylation occurs at serine 71. Residue phenylalanine 228 participates in substrate binding. Residue cysteine 461 coordinates heme.

It belongs to the cytochrome P450 family. In terms of assembly, interacts with cytosolic chaperones HSP70 and HSP90; this interaction is required for initial targeting to mitochondria. Interacts (via mitochondrial targeting signal) with TOMM40 (via N-terminus); this interaction is required for translocation across the mitochondrial outer membrane. It depends on heme as a cofactor.

It is found in the endoplasmic reticulum membrane. Its subcellular location is the mitochondrion inner membrane. The protein localises to the microsome membrane. The protein resides in the cytoplasm. The enzyme catalyses an organic molecule + reduced [NADPH--hemoprotein reductase] + O2 = an alcohol + oxidized [NADPH--hemoprotein reductase] + H2O + H(+). It catalyses the reaction estrone + reduced [NADPH--hemoprotein reductase] + O2 = 2-hydroxyestrone + oxidized [NADPH--hemoprotein reductase] + H2O + H(+). It carries out the reaction estrone + reduced [NADPH--hemoprotein reductase] + O2 = 4-hydroxyestrone + oxidized [NADPH--hemoprotein reductase] + H2O + H(+). The catalysed reaction is estrone + reduced [NADPH--hemoprotein reductase] + O2 = 6alpha-hydroxyestrone + oxidized [NADPH--hemoprotein reductase] + H2O + H(+). The enzyme catalyses estrone + reduced [NADPH--hemoprotein reductase] + O2 = 15alpha-hydroxyestrone + oxidized [NADPH--hemoprotein reductase] + H2O + H(+). It catalyses the reaction estrone + reduced [NADPH--hemoprotein reductase] + O2 = 16alpha-hydroxyestrone + oxidized [NADPH--hemoprotein reductase] + H2O + H(+). It carries out the reaction 17beta-estradiol + reduced [NADPH--hemoprotein reductase] + O2 = 2-hydroxy-17beta-estradiol + oxidized [NADPH--hemoprotein reductase] + H2O + H(+). The catalysed reaction is 17beta-estradiol + reduced [NADPH--hemoprotein reductase] + O2 = 4-hydroxy-17beta-estradiol + oxidized [NADPH--hemoprotein reductase] + H2O + H(+). The enzyme catalyses 17beta-estradiol + reduced [NADPH--hemoprotein reductase] + O2 = 6alpha-hydroxy-17beta-estradiol + oxidized [NADPH--hemoprotein reductase] + H2O + H(+). It catalyses the reaction 17beta-estradiol + reduced [NADPH--hemoprotein reductase] + O2 = 7alpha-hydroxy-17beta-estradiol + oxidized [NADPH--hemoprotein reductase] + H2O + H(+). It carries out the reaction 17beta-estradiol + reduced [NADPH--hemoprotein reductase] + O2 = 15alpha-hydroxy-17beta-estradiol + oxidized [NADPH--hemoprotein reductase] + H2O + H(+). The catalysed reaction is (5Z,8Z,11Z)-eicosatrienoate + reduced [NADPH--hemoprotein reductase] + O2 = 19-hydroxy-(5Z,8Z,11Z)-eicosatrienoate + oxidized [NADPH--hemoprotein reductase] + H2O + H(+). The enzyme catalyses (5Z,8Z,11Z,14Z)-eicosatetraenoate + reduced [NADPH--hemoprotein reductase] + O2 = 16-hydroxy-(5Z,8Z,11Z,14Z)-eicosatetraenoate + oxidized [NADPH--hemoprotein reductase] + H2O + H(+). It catalyses the reaction (5Z,8Z,11Z,14Z)-eicosatetraenoate + reduced [NADPH--hemoprotein reductase] + O2 = 17-hydroxy-(5Z,8Z,11Z,14Z)-eicosatetraenoate + oxidized [NADPH--hemoprotein reductase] + H2O + H(+). It carries out the reaction (5Z,8Z,11Z,14Z)-eicosatetraenoate + reduced [NADPH--hemoprotein reductase] + O2 = 18-hydroxy-(5Z,8Z,11Z,14Z)-eicosatetraenoate + oxidized [NADPH--hemoprotein reductase] + H2O + H(+). The catalysed reaction is (5Z,8Z,11Z,14Z)-eicosatetraenoate + reduced [NADPH--hemoprotein reductase] + O2 = 19-hydroxy-(5Z,8Z,11Z,14Z)-eicosatetraenoate + oxidized [NADPH--hemoprotein reductase] + H2O + H(+). The enzyme catalyses (5Z,8Z,11Z,14Z,17Z)-eicosapentaenoate + reduced [NADPH--hemoprotein reductase] + O2 = 19-hydroxy-(5Z,8Z,11Z,14Z,17Z)-eicosapentaenoate + oxidized [NADPH--hemoprotein reductase] + H2O + H(+). It catalyses the reaction (5Z,8Z,11Z,14Z)-eicosatetraenoate + reduced [NADPH--hemoprotein reductase] + O2 = (8R,9S)-epoxy-(5Z,11Z,14Z)-eicosatrienoate + oxidized [NADPH--hemoprotein reductase] + H2O + H(+). It carries out the reaction (5Z,8Z,11Z,14Z)-eicosatetraenoate + reduced [NADPH--hemoprotein reductase] + O2 = (11R,12S)-epoxy-(5Z,8Z,14Z)-eicosatrienoate + oxidized [NADPH--hemoprotein reductase] + H2O + H(+). The catalysed reaction is (5Z,8Z,11Z,14Z)-eicosatetraenoate + reduced [NADPH--hemoprotein reductase] + O2 = (14S,15R)-epoxy-(5Z,8Z,11Z)-eicosatrienoate + oxidized [NADPH--hemoprotein reductase] + H2O + H(+). The enzyme catalyses (5Z,8Z,11Z,14Z)-eicosatetraenoate + reduced [NADPH--hemoprotein reductase] + O2 = (14R,15S)-epoxy-(5Z,8Z,11Z)-eicosatrienoate + oxidized [NADPH--hemoprotein reductase] + H2O + H(+). It catalyses the reaction (5Z,8Z,11Z,14Z,17Z)-eicosapentaenoate + reduced [NADPH--hemoprotein reductase] + O2 = (17R,18S)-epoxy-(5Z,8Z,11Z,14Z)-eicosatetraenoate + oxidized [NADPH--hemoprotein reductase] + H2O + H(+). It carries out the reaction (4Z,7Z,10Z,13Z,16Z,19Z)-docosahexaenoate + reduced [NADPH--hemoprotein reductase] + O2 = (19S,20R)-epoxy-(4Z,7Z,10Z,13Z,16Z)-docosapentaenoate + oxidized [NADPH--hemoprotein reductase] + H2O + H(+). The catalysed reaction is (4Z,7Z,10Z,13Z,16Z,19Z)-docosahexaenoate + reduced [NADPH--hemoprotein reductase] + O2 = (19R,20S)-epoxy-(4Z,7Z,10Z,13Z,16Z)-docosapentaenoate + oxidized [NADPH--hemoprotein reductase] + H2O + H(+). The enzyme catalyses all-trans-retinol + reduced [NADPH--hemoprotein reductase] + O2 = all-trans-retinal + oxidized [NADPH--hemoprotein reductase] + 2 H2O + H(+). It catalyses the reaction all-trans-retinal + reduced [NADPH--hemoprotein reductase] + O2 = all-trans-retinoate + oxidized [NADPH--hemoprotein reductase] + H2O + 2 H(+). It carries out the reaction (13S)-hydroperoxy-(9Z,11E)-octadecadienoate = 13-oxo-(9Z,11E)-octadecadienoate + H2O. The catalysed reaction is (12S)-hydroperoxy-(5Z,8Z,10E,14Z)-eicosatetraenoate = 12-oxo-(5Z,8Z,10E,14Z)-eicosatetraenoate + H2O. The enzyme catalyses (15S)-hydroperoxy-(5Z,8Z,11Z,13E)-eicosatetraenoate = 15-oxo-(5Z,8Z,11Z,13E)-eicosatetraenoate + H2O. It catalyses the reaction (5S)-hydroperoxy-(6E,8Z,11Z,14Z)-eicosatetraenoate = 5-oxo-(6E,8Z,11Z,14Z)-eicosatetraenoate + H2O. It functions in the pathway steroid hormone biosynthesis. The protein operates within lipid metabolism; fatty acid metabolism. Its pathway is cofactor metabolism; retinol metabolism. In terms of biological role, a cytochrome P450 monooxygenase involved in the metabolism of various endogenous substrates, including fatty acids, steroid hormones and vitamins. Mechanistically, uses molecular oxygen inserting one oxygen atom into a substrate, and reducing the second into a water molecule, with two electrons provided by NADPH via cytochrome P450 reductase (CPR; NADPH-ferrihemoprotein reductase). Catalyzes the hydroxylation of carbon-hydrogen bonds. Exhibits high catalytic activity for the formation of hydroxyestrogens from estrone (E1) and 17beta-estradiol (E2), namely 2-hydroxy E1 and E2, as well as D-ring hydroxylated E1 and E2 at the C15alpha and C16alpha positions. Displays different regioselectivities for polyunsaturated fatty acids (PUFA) hydroxylation. Catalyzes the epoxidation of double bonds of certain PUFA. Converts arachidonic acid toward epoxyeicosatrienoic acid (EET) regioisomers, 8,9-, 11,12-, and 14,15-EET, that function as lipid mediators in the vascular system. Displays an absolute stereoselectivity in the epoxidation of eicosapentaenoic acid (EPA) producing the 17(R),18(S) enantiomer. May play an important role in all-trans retinoic acid biosynthesis in extrahepatic tissues. Catalyzes two successive oxidative transformation of all-trans retinol to all-trans retinal and then to the active form all-trans retinoic acid. May also participate in eicosanoids metabolism by converting hydroperoxide species into oxo metabolites (lipoxygenase-like reaction, NADPH-independent). In Balaenoptera acutorostrata (Common minke whale), this protein is Cytochrome P450 1A1 (CYP1A1).